The following is a 443-amino-acid chain: Chromosome partition protein MukF (443 aa).

The leucine-zipper stretch occupies residues 209 to 237; it reads LDETSGNLRELQDTLNAAGDKLQAQLLRI.

The protein belongs to the MukF family. As to quaternary structure, interacts, and probably forms a ternary complex, with MukE and MukB via its C-terminal region. The complex formation is stimulated by calcium or magnesium. It is required for an interaction between MukE and MukB.

It is found in the cytoplasm. It localises to the nucleoid. Its function is as follows. Involved in chromosome condensation, segregation and cell cycle progression. May participate in facilitating chromosome segregation by condensation DNA from both sides of a centrally located replisome during cell division. Not required for mini-F plasmid partitioning. Probably acts via its interaction with MukB and MukE. Overexpression results in anucleate cells. It has a calcium binding activity. The polypeptide is Chromosome partition protein MukF (Actinobacillus pleuropneumoniae serotype 5b (strain L20)).